We begin with the raw amino-acid sequence, 623 residues long: Interleukin-27 receptor subunit alpha (623 aa).

Positions 1-24 (MNRLRVARLTPLELLLSLMSLLLG) are cleaved as a signal peptide. Residues 25-510 (TRPHGSPGPL…HLPDNRIRWK (486 aa)) are Extracellular-facing. Fibronectin type-III domains lie at 30-124 (SPGP…MKPD) and 125-225 (TPQI…TPFL). A glycan (N-linked (GlcNAc...) asparagine) is linked at Asn-46. A WSXWS motif motif is present at residues 211–215 (WGEWS). 5 N-linked (GlcNAc...) asparagine glycosylation sites follow: Asn-296, Asn-305, Asn-360, Asn-368, and Asn-461. 2 Fibronectin type-III domains span residues 316 to 412 (APCD…VPLA) and 413 to 505 (GPAV…LPDN). Residues 511-531 (ALPWFLSLWGLLLMGCGLSLA) form a helical membrane-spanning segment. Residues 532 to 623 (STRCLQARCL…PTPEELGLLV (92 aa)) are Cytoplasmic-facing. The Box 1 motif signature appears at 552 to 560 (IWERVPDPA).

The protein belongs to the type I cytokine receptor family. Type 2 subfamily. In terms of tissue distribution, expressed in CD4+ and CD8+ T-cells, B-cells, natural killer cells and macrophages. Highest levels in CD4+ T-cells and natural killer cells. Expression highest in Th0 cells.

The protein resides in the membrane. Receptor for IL27. Requires IL6ST/GP130 to mediate signal transduction in response to IL27. This signaling system acts through STAT3 and STAT1. Involved in the regulation of Th1-type immune responses. Also appears to be involved in innate defense mechanisms. This chain is Interleukin-27 receptor subunit alpha (Il27ra), found in Mus musculus (Mouse).